The following is a 299-amino-acid chain: Streptogrisin-B (299 aa).

Positions Met1–Ala38 are cleaved as a signal peptide. Residues Glu39–Leu114 constitute a propeptide that is removed on maturation. Cys128 and Cys148 are disulfide-bonded. Active-site charge relay system residues include His147, Asp177, and Ser255. A disulfide bond links Cys249 and Cys276.

This sequence belongs to the peptidase S1 family. In terms of assembly, monomer.

The catalysed reaction is Hydrolysis of proteins with trypsin-like specificity.. In terms of biological role, has a primary specificity for large aliphatic or aromatic amino acids. The sequence is that of Streptogrisin-B (sprB) from Streptomyces griseus.